A 159-amino-acid polypeptide reads, in one-letter code: SsrA-binding protein (159 aa).

Positions 134 to 159 (KLHDKRETSKERDWNRQKNRLLKERG) are disordered. A compositionally biased stretch (basic and acidic residues) spans 137 to 159 (DKRETSKERDWNRQKNRLLKERG).

The protein belongs to the SmpB family.

Its subcellular location is the cytoplasm. Required for rescue of stalled ribosomes mediated by trans-translation. Binds to transfer-messenger RNA (tmRNA), required for stable association of tmRNA with ribosomes. tmRNA and SmpB together mimic tRNA shape, replacing the anticodon stem-loop with SmpB. tmRNA is encoded by the ssrA gene; the 2 termini fold to resemble tRNA(Ala) and it encodes a 'tag peptide', a short internal open reading frame. During trans-translation Ala-aminoacylated tmRNA acts like a tRNA, entering the A-site of stalled ribosomes, displacing the stalled mRNA. The ribosome then switches to translate the ORF on the tmRNA; the nascent peptide is terminated with the 'tag peptide' encoded by the tmRNA and targeted for degradation. The ribosome is freed to recommence translation, which seems to be the essential function of trans-translation. This Rhizobium meliloti (strain 1021) (Ensifer meliloti) protein is SsrA-binding protein.